The primary structure comprises 387 residues: Formate-dependent phosphoribosylglycinamide formyltransferase (387 aa).

Residues 15-16 (EL) and glutamate 75 contribute to the N(1)-(5-phospho-beta-D-ribosyl)glycinamide site. ATP contacts are provided by residues arginine 106, lysine 147, 152 to 157 (SSGKGQ), 187 to 190 (EEFI), and glutamate 195. Residues 111-301 (DLASNELNIR…EFELHLRAVL (191 aa)) enclose the ATP-grasp domain. Mg(2+) contacts are provided by glutamate 260 and glutamate 272. N(1)-(5-phospho-beta-D-ribosyl)glycinamide is bound by residues aspartate 279, lysine 349, and 356–357 (RR).

Belongs to the PurK/PurT family. In terms of assembly, homodimer.

The catalysed reaction is N(1)-(5-phospho-beta-D-ribosyl)glycinamide + formate + ATP = N(2)-formyl-N(1)-(5-phospho-beta-D-ribosyl)glycinamide + ADP + phosphate + H(+). Its pathway is purine metabolism; IMP biosynthesis via de novo pathway; N(2)-formyl-N(1)-(5-phospho-D-ribosyl)glycinamide from N(1)-(5-phospho-D-ribosyl)glycinamide (formate route): step 1/1. Involved in the de novo purine biosynthesis. Catalyzes the transfer of formate to 5-phospho-ribosyl-glycinamide (GAR), producing 5-phospho-ribosyl-N-formylglycinamide (FGAR). Formate is provided by PurU via hydrolysis of 10-formyl-tetrahydrofolate. The protein is Formate-dependent phosphoribosylglycinamide formyltransferase of Prochlorococcus marinus (strain NATL2A).